Consider the following 508-residue polypeptide: MQRASTQDVYDGSGDDLNKLDSLKSVLNDVLSSLERFQVDLDVATSDIYKVSERSNKIQVNLNNLKAVESALGAEIDGAILPPDLIKTISTGDMDHPSWNSALEKLTSFLEGGEDDSSLGNMFNSLQINKDQKKLVDKLRDKAIERIRNYIVVTIKMFRQAFVDVFPIRKHRLIANKNYYLFLFKFNRKLALELQRAYINTMNWFYLYHFEQYSRFLDKVHVLKGETIRVEEDRKGLFNLSKGAQQSYGNQMLSVNLRPQDFDMNSVLTASTMHHIESSPQYIERVYCSWELVLTEHVSSEYAFLLEYFNLSKDQQATVFAAIFEKTLHFSRKYITGLISSSIDCIGILKSIRFTQKLALQAQTNIVPVIEPHYNSMILFLWPRFQAVMDMHCESLRKTNLSVKPEEITSRPHPLSQRVAELLYSLSMLSVNVVEAEPVARSASRLAQDYVSMLQNLCKTVNDKRRQSRFLSNNYTLISTVLSGVSGNLAIEQKTYFEKLNENLTNFQ.

The protein belongs to the VPS52 family. Component of the Golgi-associated retrograde protein (GARP) complex.

The protein localises to the golgi apparatus. It is found in the trans-Golgi network membrane. Its function is as follows. Involved in retrograde transport from early and late endosomes to late Golgi by linking the vesicle through the t-SNARE TGL1 to the Golgi, leading to the membrane fusion between late Golgi and endosomal vesicles. This is Vacuolar protein sorting-associated protein 52 (vps52) from Schizosaccharomyces pombe (strain 972 / ATCC 24843) (Fission yeast).